We begin with the raw amino-acid sequence, 326 residues long: BTB/POZ domain-containing protein At1g21780 (326 aa).

A BTB domain is found at 161–228 (TDVIIHTADG…LYGNITQEEF (68 aa)).

Homodimer. Interacts with CUL3A and CUL3B.

It participates in protein modification; protein ubiquitination. Functionally, may act as a substrate-specific adapter of an E3 ubiquitin-protein ligase complex (CUL3-RBX1-BTB) which mediates the ubiquitination and subsequent proteasomal degradation of target proteins. In Arabidopsis thaliana (Mouse-ear cress), this protein is BTB/POZ domain-containing protein At1g21780.